Reading from the N-terminus, the 553-residue chain is Glycerol kinase 2 (553 aa).

A substrate-binding site is contributed by threonine 20. Arginine 24 is an ATP binding site. The substrate site is built by arginine 94, tyrosine 148, and aspartate 259. Residues threonine 281, glycine 326, and 427-431 contribute to the ATP site; that span reads GMTNN. Residues 526 to 546 traverse the membrane as a helical segment; the sequence is IFSSMPLGFFIVSSMVMLIGA.

This sequence belongs to the FGGY kinase family. Interacts with ARMC12 and PLD6.

The protein resides in the mitochondrion outer membrane. The protein localises to the cytoplasm. It catalyses the reaction glycerol + ATP = sn-glycerol 3-phosphate + ADP + H(+). It functions in the pathway polyol metabolism; glycerol degradation via glycerol kinase pathway; sn-glycerol 3-phosphate from glycerol: step 1/1. Key enzyme in the regulation of glycerol uptake and metabolism. Essential for male fertility and sperm mitochondrial sheath formation. Required for proper arrangement of crescent-like mitochondria to form the mitochondrial sheath during spermatogenesis. Can induce mitochondrial clustering through interactions with PLD6 and up-regulation of phosphatidic acid synthesis in the mitochondria. In Macaca fascicularis (Crab-eating macaque), this protein is Glycerol kinase 2 (GK2).